The sequence spans 230 residues: Mitochondrial fission factor homolog B (230 aa).

Residues 1–210 (MSGAAFPSPT…ENKERAKREM (210 aa)) are Cytoplasmic-facing. The segment at 117-153 (EQTSSVSHPSEEVRTQTKTRRERSVSENAGVHHNGPL) is disordered. Serine 142 carries the phosphoserine modification. Positions 179–210 (VDATSLRRQIVKLNRRLQLLEEENKERAKREM) form a coiled coil. A helical; Anchor for type IV membrane protein transmembrane segment spans residues 211 to 228 (VMYSITVAFWLVNSWVWF). The Extracellular portion of the chain corresponds to 229–230 (RR).

This sequence belongs to the Tango11 family.

The protein resides in the mitochondrion outer membrane. It is found in the peroxisome. Functionally, plays a role in mitochondrial and peroxisomal fission. Promotes the recruitment and association of the fission mediator dynamin-related protein 1 (DNM1L) to the mitochondrial surface. The polypeptide is Mitochondrial fission factor homolog B (Danio rerio (Zebrafish)).